Reading from the N-terminus, the 198-residue chain is Dual specificity protein phosphatase 13B (198 aa).

The region spanning His45–Arg193 is the Tyrosine-protein phosphatase domain. Cys138 (phosphocysteine intermediate) is an active-site residue.

It belongs to the protein-tyrosine phosphatase family. Non-receptor class dual specificity subfamily. As to expression, most abundantly expressed in the testis.

The enzyme catalyses O-phospho-L-tyrosyl-[protein] + H2O = L-tyrosyl-[protein] + phosphate. The catalysed reaction is O-phospho-L-seryl-[protein] + H2O = L-seryl-[protein] + phosphate. It catalyses the reaction O-phospho-L-threonyl-[protein] + H2O = L-threonyl-[protein] + phosphate. Dual specificity phosphatase that dephosphorylates MAPK8/JNK and MAPK14/p38, but not MAPK1/ERK2, in vitro. Exhibits intrinsic phosphatase activity towards both phospho-seryl/threonyl and -tyrosyl residues, with similar specific activities in vitro. This is Dual specificity protein phosphatase 13B from Mus musculus (Mouse).